The following is a 361-amino-acid chain: Probable galacturonosyltransferase-like 7 (361 aa).

A helical; Signal-anchor for type II membrane protein transmembrane segment spans residues 1-21 (MLWIMRFSGLFSAALVIIVLS). Residues 22–361 (PSLQSFPPAE…PYDLYGHYSR (340 aa)) lie on the Lumenal side of the membrane. Residue Asn-217 is glycosylated (N-linked (GlcNAc...) asparagine).

The protein belongs to the glycosyltransferase 8 family.

It is found in the golgi apparatus membrane. Its pathway is glycan metabolism; pectin biosynthesis. In terms of biological role, may be involved in pectin and/or xylans biosynthesis in cell walls. The sequence is that of Probable galacturonosyltransferase-like 7 (GATL7) from Arabidopsis thaliana (Mouse-ear cress).